The following is a 173-amino-acid chain: MAIILGIDPGSRITGYGVIQRAGRQQQYLGSGCIRMQGDALAPRLQQIFDGVSQLILQYKPDMFAIEQVFMAKNPDSALKLGQARGAAIVAASNQGLDVAEYSARQIKQSVVGNGNAQKSQVQHMVTFILKLPGTPQADAADALAVALCHSHTNENLIKMSGQVKKTVRGRLR.

Catalysis depends on residues aspartate 8, glutamate 67, and aspartate 139. Aspartate 8, glutamate 67, and aspartate 139 together coordinate Mg(2+).

It belongs to the RuvC family. As to quaternary structure, homodimer which binds Holliday junction (HJ) DNA. The HJ becomes 2-fold symmetrical on binding to RuvC with unstacked arms; it has a different conformation from HJ DNA in complex with RuvA. In the full resolvosome a probable DNA-RuvA(4)-RuvB(12)-RuvC(2) complex forms which resolves the HJ. Mg(2+) serves as cofactor.

The protein localises to the cytoplasm. It carries out the reaction Endonucleolytic cleavage at a junction such as a reciprocal single-stranded crossover between two homologous DNA duplexes (Holliday junction).. In terms of biological role, the RuvA-RuvB-RuvC complex processes Holliday junction (HJ) DNA during genetic recombination and DNA repair. Endonuclease that resolves HJ intermediates. Cleaves cruciform DNA by making single-stranded nicks across the HJ at symmetrical positions within the homologous arms, yielding a 5'-phosphate and a 3'-hydroxyl group; requires a central core of homology in the junction. The consensus cleavage sequence is 5'-(A/T)TT(C/G)-3'. Cleavage occurs on the 3'-side of the TT dinucleotide at the point of strand exchange. HJ branch migration catalyzed by RuvA-RuvB allows RuvC to scan DNA until it finds its consensus sequence, where it cleaves and resolves the cruciform DNA. In Pseudoalteromonas atlantica (strain T6c / ATCC BAA-1087), this protein is Crossover junction endodeoxyribonuclease RuvC.